A 160-amino-acid polypeptide reads, in one-letter code: Baculoviral IAP repeat-containing protein 5.1-A (160 aa).

A BIR repeat occupies 27-97 (RLATFADWPF…KRSANCGFLS (71 aa)). Threonine 43 carries the post-translational modification Phosphothreonine; by CDK1. Zn(2+) is bound by residues cysteine 66, cysteine 69, histidine 86, and cysteine 93.

This sequence belongs to the IAP family. Component of the CPC at least composed of survivin/birc5, incenp, cdca8/borealin and/or cdca9/dasra-A, and aurkb/aurora-B. Interacts directly with incenp (via N-terminus), and may weakly interact with aurkb (via N-terminus) to stabilize the complex. Interacts with GTP-bound ran in both the S and M phases of the cell cycle. Also found in a complex with ubiquitin-mediated signaling proteins including at least usp9x/xFAM, nploc4/npl4 and ufd1. In terms of processing, ubiquitination is required for centrosome-targeting.

The protein resides in the cytoplasm. The protein localises to the nucleus. It localises to the chromosome. Its subcellular location is the centromere. It is found in the cytoskeleton. The protein resides in the spindle. Its function is as follows. Component of the chromosomal passenger complex (CPC), a complex that acts as a key regulator of mitosis. The CPC complex has essential functions at the centromere in ensuring correct chromosome alignment and segregation and is required for chromatin-induced microtubule stabilization and spindle assembly. Stimulates the mitotic kinase activity of aurkb/aurora-B in the CPC. Does not appear to exhibit anti-apoptotic activity. The chain is Baculoviral IAP repeat-containing protein 5.1-A (birc5.1-a) from Xenopus laevis (African clawed frog).